The following is a 184-amino-acid chain: uncharacterized protein (184 aa).

A signal peptide spans 1-23 (MFCLLHLCFYLANFASSIKRTHA).

The protein localises to the secreted. This is an uncharacterized protein from Homo sapiens (Human).